Consider the following 247-residue polypeptide: Cell division protein ZapD (247 aa).

It belongs to the ZapD family. In terms of assembly, interacts with FtsZ.

It is found in the cytoplasm. In terms of biological role, cell division factor that enhances FtsZ-ring assembly. Directly interacts with FtsZ and promotes bundling of FtsZ protofilaments, with a reduction in FtsZ GTPase activity. This chain is Cell division protein ZapD, found in Salmonella choleraesuis (strain SC-B67).